A 302-amino-acid polypeptide reads, in one-letter code: Heat stress transcription factor B-1 (302 aa).

A compositionally biased stretch (low complexity) spans 1-15 (MAAAEAAAAVGKQQQ). Disordered regions lie at residues 1-33 (MAAAEAAAAVGKQQQKGGGGRGGGGGGPAPFLT) and 116-184 (GIRR…RKDN). The span at 16 to 28 (KGGGGRGGGGGGP) shows a compositional bias: gly residues. Polar residues predominate over residues 123–133 (TTPQSSKSCGS). The span at 139–150 (FPPPLPPLPPEP) shows a compositional bias: pro residues. Over residues 151–172 (SATTSSGNDRSSSSASSPPRAD) the composition is skewed to low complexity. Residues 170–202 (RADITSENEQLRKDNQTLTMELARARRHCEELL) adopt a coiled-coil conformation. Residues 180–209 (LRKDNQTLTMELARARRHCEELLGFLSRFL) form a hydrophobic repeat HR-A/B region. The short motif at 211–218 (VRQLDLRL) is the Nuclear export signal element. A Nuclear localization signal motif is present at residues 263-267 (RKRAR).

The protein belongs to the HSF family. Class B subfamily. As to quaternary structure, homotrimer. In terms of processing, exhibits temperature-dependent phosphorylation.

It localises to the cytoplasm. It is found in the nucleus. In terms of biological role, transcriptional regulator that specifically binds DNA of heat shock promoter elements (HSE). The chain is Heat stress transcription factor B-1 (HSFB1) from Oryza sativa subsp. japonica (Rice).